The chain runs to 182 residues: Isopentenyl-diphosphate Delta-isomerase (182 aa).

Mn(2+) is bound by residues histidine 25 and histidine 32. A Nudix hydrolase domain is found at 30–164; that stretch reads LLHLAFSSWL…PWAFSPWMVM (135 aa). The active site involves cysteine 67. Histidine 69 is a binding site for Mn(2+). Glutamate 87 is a Mg(2+) binding site. Mn(2+)-binding residues include glutamate 114 and glutamate 116. Glutamate 116 is an active-site residue.

It belongs to the IPP isomerase type 1 family. Homodimer. It depends on Mg(2+) as a cofactor. Requires Mn(2+) as cofactor.

The protein localises to the cytoplasm. It carries out the reaction isopentenyl diphosphate = dimethylallyl diphosphate. It participates in isoprenoid biosynthesis; dimethylallyl diphosphate biosynthesis; dimethylallyl diphosphate from isopentenyl diphosphate: step 1/1. Functionally, catalyzes the 1,3-allylic rearrangement of the homoallylic substrate isopentenyl (IPP) to its highly electrophilic allylic isomer, dimethylallyl diphosphate (DMAPP). The chain is Isopentenyl-diphosphate Delta-isomerase from Shigella flexneri serotype 5b (strain 8401).